We begin with the raw amino-acid sequence, 202 residues long: NADH-quinone oxidoreductase subunit C (202 aa).

The protein belongs to the complex I 30 kDa subunit family. NDH-1 is composed of 14 different subunits. Subunits NuoB, C, D, E, F, and G constitute the peripheral sector of the complex.

It is found in the cell inner membrane. The catalysed reaction is a quinone + NADH + 5 H(+)(in) = a quinol + NAD(+) + 4 H(+)(out). Functionally, NDH-1 shuttles electrons from NADH, via FMN and iron-sulfur (Fe-S) centers, to quinones in the respiratory chain. The immediate electron acceptor for the enzyme in this species is believed to be ubiquinone. Couples the redox reaction to proton translocation (for every two electrons transferred, four hydrogen ions are translocated across the cytoplasmic membrane), and thus conserves the redox energy in a proton gradient. This is NADH-quinone oxidoreductase subunit C from Albidiferax ferrireducens (strain ATCC BAA-621 / DSM 15236 / T118) (Rhodoferax ferrireducens).